Consider the following 530-residue polypeptide: DEK domain-containing chromatin-associated protein 2 (530 aa).

2 stretches are compositionally biased toward basic and acidic residues: residues 1–47 and 57–68; these read MATE…AEEE and AKEGELGEKDKE. The segment at 1 to 130 is disordered; that stretch reads MATETLDEKT…PSKSVSIEKG (130 aa). Positions 41 to 61 form a coiled coil; the sequence is IGEAEEEKKEDEEEGEAKEGE. The span at 69–82 shows a compositional bias: acidic residues; the sequence is DDVESEEEEEEEEG. 2 stretches are compositionally biased toward basic and acidic residues: residues 83-93 and 100-110; these read SGSKKSSEKET and RPTRERKKVER. The stretch at 185–205 forms a coiled coil; sequence EKEEEKQRARIKEKIDKCVKE. The disordered stretch occupies residues 246-430; it reads IIADQEKAKK…GKAKAEPTRK (185 aa). Residues 253 to 263 are compositionally biased toward basic residues; the sequence is AKKRKSTPKRG. The Nuclear localization signal 1 signature appears at 260–267; it reads PKRGKSGE. A compositionally biased stretch (acidic residues) spans 286 to 332; the sequence is SDTEEGKDEGDADSEGTNDPHEEDDAAPEEESDHEKTDTDDEKDEVE. 2 consecutive short sequence motifs (nuclear localization signal) follow at residues 343-350 and 384-391; these read SKKTVEES and AKKQKVDH. Over residues 374-384 the composition is skewed to polar residues; it reads KQIAKSTSSPA. Residues 387 to 397 show a composition bias toward basic and acidic residues; that stretch reads QKVDHVESSKE. Residues 426–481 enclose the DEK-C domain; that stretch reads EPTRKEMLEVVSKILKEVDFNTATLSDILQKLSDHFGVELSHRKPEVKDVITEAIN. DNA-binding regions lie at residues 444-458 and 473-477; these read DFNT…QKLS and KDVIT. The disordered stretch occupies residues 482–530; the sequence is AMTDDEEEDEEEEAEAGSDKEKEEVKGEEEEEKAEAESDKEKEKEEPKD. Over residues 484–497 the composition is skewed to acidic residues; that stretch reads TDDEEEDEEEEAEA. The stretch at 492 to 527 forms a coiled coil; that stretch reads EEEAEAGSDKEKEEVKGEEEEEKAEAESDKEKEKEE. Residues 516-530 show a composition bias toward basic and acidic residues; the sequence is EAESDKEKEKEEPKD.

In terms of assembly, found in a mRNA splicing-dependent exon junction complex (EJC). Binds specifically histones H3 and H4.

Its subcellular location is the nucleus. The protein resides in the nucleolus. Functionally, chromatin-associated protein which contributes to the modulation of chromatin structure (such as super-helical structure of DNA) and function. Binds to chromatin of protein-coding genes throughout the genome to regulate nucleosome occupancy and chromatin accessibility, and to modulate the expression of target genes. The protein is DEK domain-containing chromatin-associated protein 2 of Arabidopsis thaliana (Mouse-ear cress).